The chain runs to 119 residues: Large ribosomal subunit protein bL20c (119 aa).

This sequence belongs to the bacterial ribosomal protein bL20 family.

It localises to the plastid. The protein localises to the chloroplast. In terms of biological role, binds directly to 23S ribosomal RNA and is necessary for the in vitro assembly process of the 50S ribosomal subunit. It is not involved in the protein synthesizing functions of that subunit. The chain is Large ribosomal subunit protein bL20c (rpl20) from Oryza sativa (Rice).